We begin with the raw amino-acid sequence, 692 residues long: Elongation factor G (692 aa).

The region spanning 8 to 282 (EKVRNIGIAA…AVVDYLPAPS (275 aa)) is the tr-type G domain. Residues 17–24 (AHIDAGKT), 81–85 (DTPGH), and 135–138 (NKMD) each bind GTP.

This sequence belongs to the TRAFAC class translation factor GTPase superfamily. Classic translation factor GTPase family. EF-G/EF-2 subfamily.

The protein resides in the cytoplasm. Functionally, catalyzes the GTP-dependent ribosomal translocation step during translation elongation. During this step, the ribosome changes from the pre-translocational (PRE) to the post-translocational (POST) state as the newly formed A-site-bound peptidyl-tRNA and P-site-bound deacylated tRNA move to the P and E sites, respectively. Catalyzes the coordinated movement of the two tRNA molecules, the mRNA and conformational changes in the ribosome. In Nostoc punctiforme (strain ATCC 29133 / PCC 73102), this protein is Elongation factor G.